The sequence spans 171 residues: Anthrone oxygenase dmxR16 (171 aa).

The next 3 membrane-spanning stretches (helical) occupy residues 21 to 41 (VIAAAFLSAITAGAMANISMI), 67 to 87 (GHIILPGICVGTCGLYAFSAL), and 96 to 116 (YALAGITTLSLVPFTWVFMTP). N-linked (GlcNAc...) asparagine glycosylation is found at Asn-118 and Asn-129. The chain crosses the membrane as a helical span at residues 145–165 (WLHATRSMFPLIGAILGFTGI).

The protein belongs to the anthrone oxygenase family.

The protein resides in the membrane. It catalyses the reaction emodin anthrone + O2 = emodin + H2O + H(+). Its pathway is secondary metabolite biosynthesis. Functionally, anthrone oxygenase; part of the gene cluster that mediates the biosynthesis of the dimeric xanthones cryptosporioptides. The pathway begins with the synthesis of atrochrysone thioester by the polyketide synthase dmx-nrPKS. The atrochrysone carboxyl ACP thioesterase dmxR1 then breaks the thioester bond and releases the atrochrysone carboxylic acid from dmx-nrPKS. Atrochrysone carboxylic acid is decarboxylated by the decarboxylase dmxR15, and oxidized by the anthrone oxygenase dmxR16 to yield emodin. Emodin is then reduced to emodin hydroquinone by the oxidoreductase dmxR7. A-ring reduction by the short chain dehydrogenase dmxR18, dehydration by the scytalone dehydratase-like protein dmxR17 and probable spontaneous re-oxidation, results in overall deoxygenation to chrysophanol. Baeyer-Villiger oxidation by the Baeyer-Villiger monooxygenase (BVMO) dmxR6 then yields monodictylactone in equilibrium with monodictyphenone. In the case of the cryptosporioptides biosynthesis, monodictylactone is reduced at C-12 to an alcohol (by the short chain dehydrogenases dmxR12 or dmxR8) and hydroxylated at C-5 by dmxR9, yielding the electron-rich aromatic which could eliminate H(2)O to form the ortho-quinonemethide, followed by tautomerisation to paraquinone and complete the formal reduction to produce the 10-methylgroup. Conjugate addition of C-4a-OH to the resulting paraquinone by the monooxygenase dmxR10 then gives cyclohexadienone, which is then reduced at C-5 by the short chain dehydrogenase dmxR3 to give the dihydroxanthone. The 6,7-epoxide in the cryptosporioptides could be introduced by the cytochrome P450 monooxygenase dmxL3. The highly reducing PKS dmxL2 manufactures butyrate, which is further carboxylated by dmxL1 to form ethylmalonate. It is not yet clear whether the carboxylation occurs while the butyrate is attached to the ACP of dmxL2, but this unusual fungal metabolite could then be esterified to O-5 by the O-acetyltransferase dmxR13. Finally, dimerization performed by dmxR5 gives the observed dimers cryptosporioptides A, B and C as the final products of the pathway. The protein is Anthrone oxygenase dmxR16 of Cryptosporiopsis sp. (strain 8999).